The following is a 317-amino-acid chain: Olfactory receptor 6Q1 (317 aa).

The Extracellular portion of the chain corresponds to 1–27 (MQPYTKNWTQVTEFVMMGFAGIHEAHL). An N-linked (GlcNAc...) asparagine glycan is attached at N7. Residues 28-48 (LFFILFLTMYLFTLVENLAII) traverse the membrane as a helical segment. The Cytoplasmic segment spans residues 49–56 (LVVGLDHR). The helical transmembrane segment at 57–77 (LRRPMYFFLTHLSCLEIWYTS) threads the bilayer. The Extracellular portion of the chain corresponds to 78 to 103 (VTVPKMLAGFIGVDGGKNISYADCLS). N95 is a glycosylation site (N-linked (GlcNAc...) asparagine). C101 and C193 are oxidised to a cystine. Residues 104-124 (QLFIFTFLGATECFLLAAMAY) form a helical membrane-spanning segment. Residues 125-143 (DRYVAICMPLHYGAFVSWG) lie on the Cytoplasmic side of the membrane. A helical membrane pass occupies residues 144–164 (TCIRLAAACWLVGFLTPILPI). At 165-201 (YLLSQLTFYGPNVIDHFSCDASPLLALSCSDVTWKET) the chain is on the extracellular side. Residues 202–221 (VDFLVSLAVLLASSMVIAVS) form a helical membrane-spanning segment. Residues 222-241 (YGNIVWTLLHIRSAAERWKA) lie on the Cytoplasmic side of the membrane. Residues 242 to 262 (FSTCAAHLTVVSLFYGTLFFM) form a helical membrane-spanning segment. Residues 263–275 (YVQTKVTSSINFN) lie on the Extracellular side of the membrane. Residues 276-296 (KVVSVFYSVVTPMLNPLIYSL) form a helical membrane-spanning segment. Topologically, residues 297–317 (RNKEVKGALGRVFSLNFWKGQ) are cytoplasmic.

Belongs to the G-protein coupled receptor 1 family.

Its subcellular location is the cell membrane. Its function is as follows. Odorant receptor. The protein is Olfactory receptor 6Q1 (OR6Q1) of Homo sapiens (Human).